A 277-amino-acid polypeptide reads, in one-letter code: Shikimate dehydrogenase (NADP(+)) (277 aa).

Shikimate-binding positions include 15–17 and Thr-62; that span reads SLS. Residue Lys-66 is the Proton acceptor of the active site. Asn-87 and Asp-102 together coordinate shikimate. Residues 127-131, 151-156, and Ile-219 each bind NADP(+); these read GAGGA and NRTVDK. Residue Tyr-221 participates in shikimate binding. Position 242 (Gly-242) interacts with NADP(+).

It belongs to the shikimate dehydrogenase family. In terms of assembly, homodimer.

The catalysed reaction is shikimate + NADP(+) = 3-dehydroshikimate + NADPH + H(+). It participates in metabolic intermediate biosynthesis; chorismate biosynthesis; chorismate from D-erythrose 4-phosphate and phosphoenolpyruvate: step 4/7. In terms of biological role, involved in the biosynthesis of the chorismate, which leads to the biosynthesis of aromatic amino acids. Catalyzes the reversible NADPH linked reduction of 3-dehydroshikimate (DHSA) to yield shikimate (SA). This chain is Shikimate dehydrogenase (NADP(+)), found in Bacillus cereus (strain AH820).